Consider the following 259-residue polypeptide: L-erythrulose-1-phosphate isomerase (259 aa).

The active-site Electrophile is His102. The Proton acceptor role is filled by Glu174.

It belongs to the triosephosphate isomerase family.

The enzyme catalyses L-erythrulose 1-phosphate = D-erythrulose 4-phosphate. Its pathway is carbohydrate metabolism. Involved in catabolism of D-apiose. Catalyzes the isomerization of L-erythrulose 1-phosphate to D-erythrulose 4-phosphate. In Pectobacterium atrosepticum (strain SCRI 1043 / ATCC BAA-672) (Erwinia carotovora subsp. atroseptica), this protein is L-erythrulose-1-phosphate isomerase.